A 428-amino-acid chain; its full sequence is Adenylosuccinate synthetase (428 aa).

GTP-binding positions include 12-18 (GDEGKGK) and 40-42 (GHT). D13 acts as the Proton acceptor in catalysis. Positions 13 and 40 each coordinate Mg(2+). Residues 13–16 (DEGK), 38–41 (NAGH), T128, R142, Q222, T237, and R301 each bind IMP. The Proton donor role is filled by H41. A substrate-binding site is contributed by 297–303 (VNTGRAR). Residues R303, 329-331 (KLD), and 411-413 (STS) each bind GTP.

This sequence belongs to the adenylosuccinate synthetase family. Homodimer. The cofactor is Mg(2+).

Its subcellular location is the cytoplasm. It catalyses the reaction IMP + L-aspartate + GTP = N(6)-(1,2-dicarboxyethyl)-AMP + GDP + phosphate + 2 H(+). The protein operates within purine metabolism; AMP biosynthesis via de novo pathway; AMP from IMP: step 1/2. Plays an important role in the de novo pathway of purine nucleotide biosynthesis. Catalyzes the first committed step in the biosynthesis of AMP from IMP. The polypeptide is Adenylosuccinate synthetase (Caulobacter vibrioides (strain ATCC 19089 / CIP 103742 / CB 15) (Caulobacter crescentus)).